Here is a 216-residue protein sequence, read N- to C-terminus: Small ribosomal subunit protein uS5 (216 aa).

The S5 DRBM domain occupies 51-114; the sequence is LEEEVIDVNL…DDAKFNIIKV (64 aa).

Belongs to the universal ribosomal protein uS5 family. As to quaternary structure, part of the 30S ribosomal subunit. Contacts protein S4.

Its function is as follows. With S4 and S12 plays an important role in translational accuracy. The protein is Small ribosomal subunit protein uS5 of Methanothermobacter thermautotrophicus (strain ATCC 29096 / DSM 1053 / JCM 10044 / NBRC 100330 / Delta H) (Methanobacterium thermoautotrophicum).